A 127-amino-acid chain; its full sequence is Phosphoribosyl-AMP cyclohydrolase (127 aa).

Aspartate 75 is a binding site for Mg(2+). Position 76 (cysteine 76) interacts with Zn(2+). 2 residues coordinate Mg(2+): aspartate 77 and aspartate 79. Residues cysteine 93 and cysteine 100 each contribute to the Zn(2+) site.

It belongs to the PRA-CH family. Homodimer. Mg(2+) serves as cofactor. Zn(2+) is required as a cofactor.

It is found in the cytoplasm. It catalyses the reaction 1-(5-phospho-beta-D-ribosyl)-5'-AMP + H2O = 1-(5-phospho-beta-D-ribosyl)-5-[(5-phospho-beta-D-ribosylamino)methylideneamino]imidazole-4-carboxamide. Its pathway is amino-acid biosynthesis; L-histidine biosynthesis; L-histidine from 5-phospho-alpha-D-ribose 1-diphosphate: step 3/9. Its function is as follows. Catalyzes the hydrolysis of the adenine ring of phosphoribosyl-AMP. The chain is Phosphoribosyl-AMP cyclohydrolase from Desulfotalea psychrophila (strain LSv54 / DSM 12343).